The primary structure comprises 194 residues: Large ribosomal subunit protein uL6x (194 aa).

Thr-75 bears the Phosphothreonine mark.

It belongs to the universal ribosomal protein uL6 family.

The chain is Large ribosomal subunit protein uL6x (RPL9D) from Arabidopsis thaliana (Mouse-ear cress).